Consider the following 158-residue polypeptide: 2-C-methyl-D-erythritol 2,4-cyclodiphosphate synthase (158 aa).

Residues D9 and H11 each contribute to the a divalent metal cation site. Residues 9–11 (DVH) and 35–36 (HS) contribute to the 4-CDP-2-C-methyl-D-erythritol 2-phosphate site. H43 is an a divalent metal cation binding site. 4-CDP-2-C-methyl-D-erythritol 2-phosphate-binding positions include 57-59 (DIG), 62-66 (FPDTD), 101-107 (AQAPKMA), 133-136 (TTTE), F140, and R143.

Belongs to the IspF family. In terms of assembly, homotrimer. It depends on a divalent metal cation as a cofactor.

It catalyses the reaction 4-CDP-2-C-methyl-D-erythritol 2-phosphate = 2-C-methyl-D-erythritol 2,4-cyclic diphosphate + CMP. Its pathway is isoprenoid biosynthesis; isopentenyl diphosphate biosynthesis via DXP pathway; isopentenyl diphosphate from 1-deoxy-D-xylulose 5-phosphate: step 4/6. Involved in the biosynthesis of isopentenyl diphosphate (IPP) and dimethylallyl diphosphate (DMAPP), two major building blocks of isoprenoid compounds. Catalyzes the conversion of 4-diphosphocytidyl-2-C-methyl-D-erythritol 2-phosphate (CDP-ME2P) to 2-C-methyl-D-erythritol 2,4-cyclodiphosphate (ME-CPP) with a corresponding release of cytidine 5-monophosphate (CMP). The protein is 2-C-methyl-D-erythritol 2,4-cyclodiphosphate synthase of Vibrio vulnificus (strain YJ016).